A 21-amino-acid polypeptide reads, in one-letter code: Outer membrane protein A (21 aa).

A beta stranded transmembrane segment spans residues 6–16 (TWYTGAKLGWS).

It belongs to the outer membrane OOP (TC 1.B.6) superfamily. OmpA family. In terms of assembly, monomer and homodimer.

Its subcellular location is the cell outer membrane. Its function is as follows. With TolR probably plays a role in maintaining the position of the peptidoglycan cell wall in the periplasm. Acts as a porin with low permeability that allows slow penetration of small solutes; an internal gate slows down solute passage. This is Outer membrane protein A from Actinobacillus lignieresii.